A 311-amino-acid chain; its full sequence is Methionyl-tRNA formyltransferase (311 aa).

109–112 (SLLP) contributes to the (6S)-5,6,7,8-tetrahydrofolate binding site.

It belongs to the Fmt family.

It carries out the reaction L-methionyl-tRNA(fMet) + (6R)-10-formyltetrahydrofolate = N-formyl-L-methionyl-tRNA(fMet) + (6S)-5,6,7,8-tetrahydrofolate + H(+). In terms of biological role, attaches a formyl group to the free amino group of methionyl-tRNA(fMet). The formyl group appears to play a dual role in the initiator identity of N-formylmethionyl-tRNA by promoting its recognition by IF2 and preventing the misappropriation of this tRNA by the elongation apparatus. In Kosmotoga olearia (strain ATCC BAA-1733 / DSM 21960 / TBF 19.5.1), this protein is Methionyl-tRNA formyltransferase.